The chain runs to 638 residues: tRNA uridine 5-carboxymethylaminomethyl modification enzyme MnmG (638 aa).

FAD-binding positions include 13 to 18 (GGGHAG), Val125, and Ser180. 273–287 (GPRYCPSIEDKIHRF) contacts NAD(+). Gln370 provides a ligand contact to FAD.

The protein belongs to the MnmG family. As to quaternary structure, homodimer. Heterotetramer of two MnmE and two MnmG subunits. FAD serves as cofactor.

It is found in the cytoplasm. In terms of biological role, NAD-binding protein involved in the addition of a carboxymethylaminomethyl (cmnm) group at the wobble position (U34) of certain tRNAs, forming tRNA-cmnm(5)s(2)U34. This Cellvibrio japonicus (strain Ueda107) (Pseudomonas fluorescens subsp. cellulosa) protein is tRNA uridine 5-carboxymethylaminomethyl modification enzyme MnmG.